Here is a 406-residue protein sequence, read N- to C-terminus: MEGMNMGSSMNMDAMSSASKTVASSMASMSMDAMSSASKTILSSMSSMSMEAMSSASKTLASTMSSMASMSMGSSSMSGMSMSMSSTPTSSASAQTTSDSSMSGMSGMSSSDNSSSSGMDMDMSMGMNYYLTPTYKNYPVLFHHLHANNSGKAFGIFLLFVVAAFVYKLLLFVSWCLEVHWFKKWDKQNKYSTLPSANSKDEGKHYDTENNFEIQGLPKLPNLLSDIFVPSLMDLFHDIIRAFLVFTSTMIIYMLMLATMSFVLTYVFAVITGLALSEVFFNRCKIAMLKRWDIQREIQKAKSCPGFGNCQCGRHPEPSPDPIAVADTTSGSDQSTRLEKNNESKVAISENNQKKTPTQEEGCNCATDSGKNQANIERDILENSKLQEQSGNMDQNLLPAEKFTHN.

The Cytoplasmic portion of the chain corresponds to 1–152 (MEGMNMGSSM…HHLHANNSGK (152 aa)). 3 tandem repeats follow at residues 9-27 (SMNM…SSMA), 28-46 (SMSM…SSMS), and 47-65 (SMSM…STMS). The tract at residues 9–65 (SMNMDAMSSASKTVASSMASMSMDAMSSASKTILSSMSSMSMEAMSSASKTLASTMS) is 3 X 19 AA tandem repeats of S-M-X-M-X-A-M-S-S-A-S-K-T-X-X-S-X-M-X. Residues 71 to 117 (SMGSSSMSGMSMSMSSTPTSSASAQTTSDSSMSGMSGMSSSDNSSSS) form a disordered region. A helical membrane pass occupies residues 153-173 (AFGIFLLFVVAAFVYKLLLFV). Residues 174-250 (SWCLEVHWFK…RAFLVFTSTM (77 aa)) lie on the Extracellular side of the membrane. The helical transmembrane segment at 251–271 (IIYMLMLATMSFVLTYVFAVI) threads the bilayer. Residues 272-406 (TGLALSEVFF…LLPAEKFTHN (135 aa)) are Cytoplasmic-facing. Residues 304–315 (CPGFGNCQCGRH) carry the REP-III motif. The segment at 318-406 (PSPDPIAVAD…LLPAEKFTHN (89 aa)) is disordered. At S344 the chain carries Phosphoserine. K345 participates in a covalent cross-link: Glycyl lysine isopeptide (Lys-Gly) (interchain with G-Cter in ubiquitin). Phosphoserine is present on S349. Composition is skewed to polar residues over residues 349–375 (SENN…NQAN) and 384–395 (SKLQEQSGNMDQ). Position 356 is a phosphothreonine (T356). S369 carries the post-translational modification Phosphoserine.

As to quaternary structure, homooligomer. Post-translationally, extensively O-glycosylated.

The protein resides in the cell membrane. It catalyses the reaction Cu(2+)(in) = Cu(2+)(out). Its function is as follows. High-affinity copper transporter of plasma membrane that mediates copper uptake under low copper conditions. Copper transport through the high affinity system requiring CTRl supplies the iron transport multicopper ferroxidase FET3 with copper, which in turn is required for ferrous iron uptake. The energy for translocation is unlikely to be directly derived from ATP hydrolysis and the exact mechanism driving the transmembrane transport of copper has still to be determined. Binds 4 copper ions via its C-terminal cystein-rich domain and is able to deliver Cu(I) directly to both the chaperone ATX1 and to an N-terminal domain of the CCC2 protein. Also able to mediate the uptake of the anticancer drug cisplatin. This Saccharomyces cerevisiae (strain ATCC 204508 / S288c) (Baker's yeast) protein is Copper transport protein CTR1.